The sequence spans 733 residues: FYVE, RhoGEF and PH domain-containing protein 3 (733 aa).

Composition is skewed to polar residues over residues 1–11, 47–60, and 106–117; these read MELGRSSSTPQ, HSSSAPAGDSSTRE, and ETASDSRVPQDN. Positions 1–134 are disordered; sequence MELGRSSSTP…GVGEEPDPKV (134 aa). A compositionally biased stretch (acidic residues) spans 118–129; that stretch reads PQEEEDSGVGEE. Ser-124 is modified (phosphoserine). In terms of domain architecture, DH spans 153–337; that stretch reads KLLHIAQELL…STAADHSNAA (185 aa). The PH 1 domain maps to 366 to 465; sequence ELIKEGSIQK…WIQVIQATVE (100 aa). Positions 481–535 are disordered; that stretch reads CSQDEEPTLSPDQPVMSTSSVEPAGVADSNGGTPGIESRKSSSKTRRDKEKPGCK. A compositionally biased stretch (basic and acidic residues) spans 517-533; sequence ESRKSSSKTRRDKEKPG. The FYVE-type zinc-finger motif lies at 528–584; sequence DKEKPGCKSCGETFNSITKRRYRCKLCGEVICRKCSEFKAENSKQSRVCRECFLEEP. Positions 534, 537, 551, 554, 559, 562, 576, and 579 each coordinate Zn(2+). Disordered stretches follow at residues 586–612 and 712–733; these read VPPSPSSETPTELKQNAEKPPSVDPRP and GDTAGDRPGASQPQAPAGTDTP. In terms of domain architecture, PH 2 spans 612–711; it reads PSLLCGTLNL…WLKALGTAVH (100 aa). Thr-732 carries the phosphothreonine modification.

In terms of tissue distribution, detected in adult brain, spleen, lung and skeletal muscle. Detected in embryos from 7 dpc to 17 dpc.

The protein resides in the cytoplasm. The protein localises to the cytoskeleton. Promotes the formation of filopodia. May activate CDC42, a member of the Ras-like family of Rho- and Rac proteins, by exchanging bound GDP for free GTP. Plays a role in regulating the actin cytoskeleton and cell shape. The chain is FYVE, RhoGEF and PH domain-containing protein 3 (Fgd3) from Mus musculus (Mouse).